Reading from the N-terminus, the 188-residue chain is MKVIASTLRKGNVVEKDGKLYVILFAENIHPGKGTPVTQLDMRRITDGVKVSERYRTTEQVERAFVEDREHTFLYSDGEGFHFMNPENYEQIAVPEDVVGDAAPYLQEGMAVMLSVHNGVPLTIELPQRVTLEVAETEPVLKGQTASSSYKPATLSNGVRTTVPPHIAAGTRVVVMTADGSYVERAKD.

Belongs to the elongation factor P family.

It is found in the cytoplasm. Its pathway is protein biosynthesis; polypeptide chain elongation. Functionally, involved in peptide bond synthesis. Stimulates efficient translation and peptide-bond synthesis on native or reconstituted 70S ribosomes in vitro. Probably functions indirectly by altering the affinity of the ribosome for aminoacyl-tRNA, thus increasing their reactivity as acceptors for peptidyl transferase. The sequence is that of Elongation factor P from Methylobacterium radiotolerans (strain ATCC 27329 / DSM 1819 / JCM 2831 / NBRC 15690 / NCIMB 10815 / 0-1).